Consider the following 308-residue polypeptide: Protein translocase subunit SecF (308 aa).

6 helical membrane passes run 12 to 32, 127 to 147, 152 to 172, 182 to 202, 234 to 254, and 262 to 282; these read YFIFSTFMILFSLFSIFTKGF, AKNALWALALGSILILIYITI, IYALSSVLALLHDVLVTIGFI, PFIAAILTILGYSMNDTIVIF, VYTSLTTLLALAALLIFGGST, and LLVGIVYGTYSSIWLASPLVY.

The protein belongs to the SecD/SecF family. SecF subfamily. In terms of assembly, forms a complex with SecD. Part of the essential Sec protein translocation apparatus which comprises SecA, SecYEG and auxiliary proteins SecDF. Other proteins may also be involved.

It is found in the cell inner membrane. Its function is as follows. Part of the Sec protein translocase complex. Interacts with the SecYEG preprotein conducting channel. SecDF uses the proton motive force (PMF) to complete protein translocation after the ATP-dependent function of SecA. The protein is Protein translocase subunit SecF of Sebaldella termitidis (strain ATCC 33386 / NCTC 11300).